The chain runs to 136 residues: Protein NrdI (136 aa).

The protein belongs to the NrdI family.

Probably involved in ribonucleotide reductase function. The sequence is that of Protein NrdI from Shigella dysenteriae serotype 1 (strain Sd197).